Here is an 85-residue protein sequence, read N- to C-terminus: uncharacterized protein (85 aa).

This is an uncharacterized protein from Escherichia coli (Bacteriophage T4).